The sequence spans 341 residues: L-threonine 3-dehydrogenase (341 aa).

Cys38 contributes to the Zn(2+) binding site. Residues Thr40 and His43 each act as charge relay system in the active site. His63, Glu64, Cys93, Cys96, Cys99, and Cys107 together coordinate Zn(2+). NAD(+) contacts are provided by residues Ile175, Asp195, Arg200, 262 to 264 (LGI), and 286 to 287 (IY).

This sequence belongs to the zinc-containing alcohol dehydrogenase family. As to quaternary structure, homotetramer. Requires Zn(2+) as cofactor.

It localises to the cytoplasm. The catalysed reaction is L-threonine + NAD(+) = (2S)-2-amino-3-oxobutanoate + NADH + H(+). It participates in amino-acid degradation; L-threonine degradation via oxydo-reductase pathway; glycine from L-threonine: step 1/2. Catalyzes the NAD(+)-dependent oxidation of L-threonine to 2-amino-3-ketobutyrate. The sequence is that of L-threonine 3-dehydrogenase from Shewanella sp. (strain MR-7).